The primary structure comprises 178 residues: Epididymal-specific lipocalin-9 (178 aa).

The first 16 residues, 1–16, serve as a signal peptide directing secretion; it reads MVLLLVLGLVLSLATA. 3 N-linked (GlcNAc...) asparagine glycosylation sites follow: asparagine 46, asparagine 68, and asparagine 129. A disulfide bridge links cysteine 83 with cysteine 176.

The protein belongs to the calycin superfamily. Lipocalin family. In terms of tissue distribution, expressed in epididymis. Not detected in all other tissues tested.

The protein resides in the secreted. This chain is Epididymal-specific lipocalin-9 (Lcn9), found in Mus musculus (Mouse).